A 343-amino-acid chain; its full sequence is ABC transporter riboflavin-binding protein RfuA (343 aa).

The signal sequence occupies residues 1–19 (MNGAVCVLSALIAVFTCFS). C20 is lipidated: N-palmitoyl cysteine. C20 carries S-diacylglycerol cysteine lipidation. Riboflavin contacts are provided by residues 43–46 (SPVY), D124, Q140, Y176, W208, and D255.

This sequence belongs to the BMP lipoprotein family. As to quaternary structure, monomer in solution. The complex is probably composed of two ATP-binding proteins (RfuB), two transmembrane proteins (RfuC and RfuD) and a solute-binding protein (RfuA).

It localises to the cell inner membrane. Its function is as follows. Probably part of the ABC transporter complex RfuABCD involved in riboflavin import. Binds riboflavin. This Treponema pallidum (strain Nichols) protein is ABC transporter riboflavin-binding protein RfuA.